Reading from the N-terminus, the 459-residue chain is Cysteine--tRNA ligase (459 aa).

Cysteine 28 lines the Zn(2+) pocket. The 'HIGH' region motif lies at 30-40 (VTVYDLCHIGH). Residues cysteine 209, histidine 234, and glutamate 238 each coordinate Zn(2+). Positions 266–270 (KMSKS) match the 'KMSKS' region motif. Lysine 269 lines the ATP pocket.

It belongs to the class-I aminoacyl-tRNA synthetase family. In terms of assembly, monomer. Requires Zn(2+) as cofactor.

Its subcellular location is the cytoplasm. The catalysed reaction is tRNA(Cys) + L-cysteine + ATP = L-cysteinyl-tRNA(Cys) + AMP + diphosphate. The chain is Cysteine--tRNA ligase from Histophilus somni (strain 2336) (Haemophilus somnus).